Here is an 80-residue protein sequence, read N- to C-terminus: Exodeoxyribonuclease 7 small subunit (80 aa).

This sequence belongs to the XseB family. Heterooligomer composed of large and small subunits.

It localises to the cytoplasm. It carries out the reaction Exonucleolytic cleavage in either 5'- to 3'- or 3'- to 5'-direction to yield nucleoside 5'-phosphates.. Its function is as follows. Bidirectionally degrades single-stranded DNA into large acid-insoluble oligonucleotides, which are then degraded further into small acid-soluble oligonucleotides. The chain is Exodeoxyribonuclease 7 small subunit from Vibrio cholerae serotype O1 (strain ATCC 39541 / Classical Ogawa 395 / O395).